The primary structure comprises 309 residues: MITFLPIIFSILIVVTFVIGNFANGFIALVNSIEWFKRQKISFADQILTALAVSRVGLLWVLVLNWYATELNPAFNSIEVRITAYNVWAVINHFSNWLATSLSIFYLLKIANFSNLIFLHLKRRVKSVVLVILLGPLLFLVCHLFVINMNQIIWTKEYEGNMTWKIKLRSAMYLSNTTVTILANLVPFTLTLISFLLLICSLCKHLKKMQLHGKGSQDPSMKVHIKALQTVTSFLLLCAIYFLSIIMSVWSFESLENKPVFMFCEAIAFSYPSTHPFILIWGNKKLKQTFLSVLWHVRYWVKGEKPSSS.

A topological domain (extracellular) is located at residue Met1. Residues Ile2–Phe22 form a helical membrane-spanning segment. The Cytoplasmic portion of the chain corresponds to Ala23–Gln46. Residues Ile47–Tyr67 form a helical membrane-spanning segment. At Ala68–Asn86 the chain is on the extracellular side. The chain crosses the membrane as a helical span at residues Val87–Leu107. Topologically, residues Leu108–Lys126 are cytoplasmic. A helical transmembrane segment spans residues Ser127 to Ile147. The Extracellular segment spans residues Asn148–Thr178. Asn161 and Asn176 each carry an N-linked (GlcNAc...) asparagine glycan. Residues Val179–Ile199 form a helical membrane-spanning segment. Residues Cys200–Gln229 are Cytoplasmic-facing. Residues Thr230–Trp250 form a helical membrane-spanning segment. Over Ser251–Pro259 the chain is Extracellular. Residues Val260 to Ile280 form a helical membrane-spanning segment. Residues Trp281–Ser309 lie on the Cytoplasmic side of the membrane.

Belongs to the G-protein coupled receptor T2R family. Expressed in subsets of taste receptor cells of the tongue and exclusively in gustducin-positive cells. Expressed on ciliated airway epithelium.

The protein resides in the membrane. Its subcellular location is the cell projection. It is found in the cilium membrane. Receptor that may play a role in the perception of bitterness and is gustducin-linked. May play a role in sensing the chemical composition of the gastrointestinal content. The activity of this receptor may stimulate alpha gustducin, mediate PLC-beta-2 activation and lead to the gating of TRPM5. In airway epithelial cells, binding of bitter compounds increases the intracellular calcium ion concentration and stimulates ciliary beat frequency. The polypeptide is Taste receptor type 2 member 46 (TAS2R46) (Homo sapiens (Human)).